The primary structure comprises 490 residues: Phosphoglucosamine mutase (490 aa).

The active-site Phosphoserine intermediate is the serine 139. Mg(2+) is bound by residues serine 139, aspartate 279, aspartate 281, and aspartate 283. Serine 139 is subject to Phosphoserine.

The protein belongs to the phosphohexose mutase family. It depends on Mg(2+) as a cofactor. Post-translationally, activated by phosphorylation.

The enzyme catalyses alpha-D-glucosamine 1-phosphate = D-glucosamine 6-phosphate. Its function is as follows. Catalyzes the conversion of glucosamine-6-phosphate to glucosamine-1-phosphate. This chain is Phosphoglucosamine mutase, found in Trichormus variabilis (strain ATCC 29413 / PCC 7937) (Anabaena variabilis).